A 40-amino-acid chain; its full sequence is Photosystem II reaction center protein J (40 aa).

A helical membrane pass occupies residues 8 to 28 (IPLWIIGTGAGILVIGLIGIF).

This sequence belongs to the PsbJ family. As to quaternary structure, PSII is composed of 1 copy each of membrane proteins PsbA, PsbB, PsbC, PsbD, PsbE, PsbF, PsbH, PsbI, PsbJ, PsbK, PsbL, PsbM, PsbT, PsbX, PsbY, PsbZ, Psb30/Ycf12, at least 3 peripheral proteins of the oxygen-evolving complex and a large number of cofactors. It forms dimeric complexes.

Its subcellular location is the plastid. The protein resides in the chloroplast thylakoid membrane. Functionally, one of the components of the core complex of photosystem II (PSII). PSII is a light-driven water:plastoquinone oxidoreductase that uses light energy to abstract electrons from H(2)O, generating O(2) and a proton gradient subsequently used for ATP formation. It consists of a core antenna complex that captures photons, and an electron transfer chain that converts photonic excitation into a charge separation. This is Photosystem II reaction center protein J from Aethionema grandiflorum (Persian stone-cress).